The primary structure comprises 72 residues: Large ribosomal subunit protein bL31 (72 aa).

Zn(2+) is bound by residues cysteine 17, cysteine 19, cysteine 37, and cysteine 40.

This sequence belongs to the bacterial ribosomal protein bL31 family. Type A subfamily. As to quaternary structure, part of the 50S ribosomal subunit. It depends on Zn(2+) as a cofactor.

In terms of biological role, binds the 23S rRNA. In Clostridium botulinum (strain Loch Maree / Type A3), this protein is Large ribosomal subunit protein bL31.